The chain runs to 286 residues: Foldase protein PrsA 1 (286 aa).

Positions 1–18 (MKKAMLALAATSVIALSA) are cleaved as a signal peptide. Residue Cys19 is the site of N-palmitoyl cysteine attachment. Cys19 carries S-diacylglycerol cysteine lipidation. Positions 130 to 220 (KPEIKASHIL…FGYHIIKVTD (91 aa)) constitute a PpiC domain.

It belongs to the PrsA family.

Its subcellular location is the cell membrane. The catalysed reaction is [protein]-peptidylproline (omega=180) = [protein]-peptidylproline (omega=0). Functionally, plays a major role in protein secretion by helping the post-translocational extracellular folding of several secreted proteins. This chain is Foldase protein PrsA 1 (prsA1), found in Bacillus cereus (strain ATCC 14579 / DSM 31 / CCUG 7414 / JCM 2152 / NBRC 15305 / NCIMB 9373 / NCTC 2599 / NRRL B-3711).